The chain runs to 77 residues: Large ribosomal subunit protein eL14 (77 aa).

This sequence belongs to the eukaryotic ribosomal protein eL14 family.

This chain is Large ribosomal subunit protein eL14, found in Methanococcus maripaludis (strain C6 / ATCC BAA-1332).